Here is a 237-residue protein sequence, read N- to C-terminus: MDSGGWIVYCCIFFILLGKVLEYTSSYQDKWFTKLTLTPEARKLNSQYHELLSERLRLQEENHSISAQDNYARWTKNNRKLGELDKKLGTIRDKLQETNTSSKKVFGRVKLIGLTIPFWILKIWQRSHVVYHFPKQDLFPKLVTGVWARGWLYLALGPLQYLRNGSLNIQDYAPHGVSLGIWIWALQATINTLEFLVKQVILEKPVSPPPQKSKSATKAETKRPEKLEITDDKVELD.

Residues 1 to 4 (MDSG) lie on the Lumenal side of the membrane. Residues 5 to 24 (GWIVYCCIFFILLGKVLEYT) form a helical membrane-spanning segment. The Cytoplasmic segment spans residues 25-110 (SSYQDKWFTK…SSKKVFGRVK (86 aa)). A coiled-coil region spans residues 40–99 (EARKLNSQYHELLSERLRLQEENHSISAQDNYARWTKNNRKLGELDKKLGTIRDKLQETN). Residues 111–131 (LIGLTIPFWILKIWQRSHVVY) traverse the membrane as a helical segment. Over 132 to 176 (HFPKQDLFPKLVTGVWARGWLYLALGPLQYLRNGSLNIQDYAPHG) the chain is Lumenal. The chain crosses the membrane as a helical span at residues 177–193 (VSLGIWIWALQATINTL). Over 194–237 (EFLVKQVILEKPVSPPPQKSKSATKAETKRPEKLEITDDKVELD) the chain is Cytoplasmic. A disordered region spans residues 205–237 (PVSPPPQKSKSATKAETKRPEKLEITDDKVELD). A compositionally biased stretch (basic and acidic residues) spans 217–237 (TKAETKRPEKLEITDDKVELD).

Belongs to the WRB/GET1 family. In terms of assembly, component of the Golgi to ER traffic (GET) complex, which is composed of GET1, GET2 and GET3. Within the complex, GET1 and GET2 form a heterotetramer which is stabilized by phosphatidylinositol binding and which binds to the GET3 homodimer.

It localises to the endoplasmic reticulum membrane. It is found in the golgi apparatus membrane. Required for the post-translational delivery of tail-anchored (TA) proteins to the endoplasmic reticulum. Together with GET2, acts as a membrane receptor for soluble GET3, which recognizes and selectively binds the transmembrane domain of TA proteins in the cytosol. The GET complex cooperates with the HDEL receptor ERD2 to mediate the ATP-dependent retrieval of resident ER proteins that contain a C-terminal H-D-E-L retention signal from the Golgi to the ER. This chain is Golgi to ER traffic protein 1, found in Zygosaccharomyces rouxii (strain ATCC 2623 / CBS 732 / NBRC 1130 / NCYC 568 / NRRL Y-229).